The primary structure comprises 345 residues: Inositol 2-dehydrogenase (345 aa).

Belongs to the Gfo/Idh/MocA family. As to quaternary structure, homotetramer.

The enzyme catalyses myo-inositol + NAD(+) = scyllo-inosose + NADH + H(+). Its function is as follows. Involved in the oxidation of myo-inositol (MI) to 2-keto-myo-inositol (2KMI or 2-inosose). In Mycolicibacterium smegmatis (strain ATCC 700084 / mc(2)155) (Mycobacterium smegmatis), this protein is Inositol 2-dehydrogenase.